Reading from the N-terminus, the 270-residue chain is Phospholysine phosphohistidine inorganic pyrophosphate phosphatase (270 aa).

Residues D17 and S19 each contribute to the Mg(2+) site. Substrate is bound by residues 17–19, 54–55, and K189; these read DIS and TN. Residue D214 coordinates Mg(2+).

This sequence belongs to the HAD-like hydrolase superfamily. In terms of assembly, homodimer. The cofactor is Mg(2+).

It localises to the cytoplasm. Its subcellular location is the nucleus. The catalysed reaction is diphosphate + H2O = 2 phosphate + H(+). Functionally, phosphatase that hydrolyzes imidodiphosphate, 3-phosphohistidine and 6-phospholysine. Has broad substrate specificity and can also hydrolyze inorganic diphosphate, but with lower efficiency. This is Phospholysine phosphohistidine inorganic pyrophosphate phosphatase (Lhpp) from Rattus norvegicus (Rat).